A 160-amino-acid polypeptide reads, in one-letter code: Troponin C, isoform 2 (160 aa).

EF-hand domains lie at 15 to 50 (DQIE…MGQA), 51 to 86 (FEER…FVVN), 92 to 127 (GLEE…LDDN), and 128 to 160 (VSEE…MSGE). Ca(2+) contacts are provided by D64, D66, S68, E70, and E75. Residues D141, D143, S145, T147, and E152 each coordinate Ca(2+).

This sequence belongs to the troponin C family. In terms of tissue distribution, pharyngeal muscle.

The chain is Troponin C, isoform 2 (tnc-2) from Caenorhabditis elegans.